Here is a 135-residue protein sequence, read N- to C-terminus: MVDFKVVLSDPATGKAYNIDASGAGAGSFIGKRIGEEIDGAALGFDGYKIRITGASDRNGTPARKTLQIAGRRKVLMAGGVGFHPRVDGERRRKMVRGAEITQDFVQINAIVATQGSKTLAEYFAPAEPEAPAAE.

Belongs to the eukaryotic ribosomal protein eS6 family.

The sequence is that of Small ribosomal subunit protein eS6 from Methanospirillum hungatei JF-1 (strain ATCC 27890 / DSM 864 / NBRC 100397 / JF-1).